The sequence spans 152 residues: uncharacterized protein (152 aa).

It localises to the mitochondrion. This is an uncharacterized protein from Arabidopsis thaliana (Mouse-ear cress).